Here is a 206-residue protein sequence, read N- to C-terminus: Large ribosomal subunit protein uL4 (206 aa).

The segment at 47–94 is disordered; that stretch reads NRAQKDRSEINKSTKKPFRQKGTGRARAGRASSPLWRGGGKVFPNSPD. Over residues 49 to 58 the composition is skewed to basic and acidic residues; it reads AQKDRSEINK. Basic residues predominate over residues 59–74; the sequence is STKKPFRQKGTGRARA.

It belongs to the universal ribosomal protein uL4 family. In terms of assembly, part of the 50S ribosomal subunit.

Its function is as follows. One of the primary rRNA binding proteins, this protein initially binds near the 5'-end of the 23S rRNA. It is important during the early stages of 50S assembly. It makes multiple contacts with different domains of the 23S rRNA in the assembled 50S subunit and ribosome. Functionally, forms part of the polypeptide exit tunnel. This Laribacter hongkongensis (strain HLHK9) protein is Large ribosomal subunit protein uL4.